The chain runs to 316 residues: Protein C4 (316 aa).

This sequence belongs to the poxviridae OPG031 protein family.

It is found in the host cytoplasm. The protein localises to the host nucleus. In terms of biological role, plays a role in the inhibition of host NF-kappa-B activation. Mechanistically, blocks the subunit p65/RELA translocation into the host nucleus. This chain is Protein C4 (OPG031), found in Vaccinia virus (strain Western Reserve) (VACV).